A 296-amino-acid chain; its full sequence is AUGMIN subunit 2 (296 aa).

Coiled-coil stretches lie at residues 56–83 (DDLI…QGRK) and 253–285 (AVHK…NRRL). Residues 218 to 296 (AVSLPTTPGG…WPPSVKKSSV (79 aa)) form a disordered region. The span at 264–277 (QNEEEEEEEEEEDG) shows a compositional bias: acidic residues.

This sequence belongs to the HAUS2 family. Part of the augmin complex composed of 8 subunits. The complex acts on microtubules and interacts with gamma-tubulin in spindles and the phragmoplast.

In terms of biological role, contributes to the assembly of the acentrosomal spindle and phragmoplast microtubule arrays as part of the augmin complex. The sequence is that of AUGMIN subunit 2 from Arabidopsis thaliana (Mouse-ear cress).